Reading from the N-terminus, the 179-residue chain is Large ribosomal subunit protein uL5 (179 aa).

This sequence belongs to the universal ribosomal protein uL5 family. In terms of assembly, part of the 50S ribosomal subunit; part of the 5S rRNA/L5/L18/L25 subcomplex. Contacts the 5S rRNA and the P site tRNA. Forms a bridge to the 30S subunit in the 70S ribosome.

Its function is as follows. This is one of the proteins that bind and probably mediate the attachment of the 5S RNA into the large ribosomal subunit, where it forms part of the central protuberance. In the 70S ribosome it contacts protein S13 of the 30S subunit (bridge B1b), connecting the 2 subunits; this bridge is implicated in subunit movement. Contacts the P site tRNA; the 5S rRNA and some of its associated proteins might help stabilize positioning of ribosome-bound tRNAs. This chain is Large ribosomal subunit protein uL5, found in Desulfovibrio desulfuricans (strain ATCC 27774 / DSM 6949 / MB).